A 423-amino-acid polypeptide reads, in one-letter code: Ornithine cyclodeaminase (423 aa).

NAD(+) contacts are provided by Asn241, Ala242, Asp320, Thr352, Met353, Leu354, His355, Asp373, Asp396, and Val397.

The protein belongs to the AgrE/ArgZ ornithine cyclodeaminase family. It depends on NAD(+) as a cofactor.

The catalysed reaction is L-ornithine = L-proline + NH4(+). In terms of biological role, catalyzes the conversion of ornithine to proline, with the release of ammonia. This Methanocaldococcus jannaschii (strain ATCC 43067 / DSM 2661 / JAL-1 / JCM 10045 / NBRC 100440) (Methanococcus jannaschii) protein is Ornithine cyclodeaminase.